We begin with the raw amino-acid sequence, 826 residues long: Ubiquitin carboxyl-terminal hydrolase 16 (826 aa).

The disordered stretch occupies residues 1-23 (MGKKRTKGKSVPEKASSESTEPM). The UBP-type zinc-finger motif lies at 22-141 (PMCRHLRKGL…QVVDYVRKQA (120 aa)). Zn(2+) is bound by residues cysteine 24, histidine 26, cysteine 48, cysteine 51, cysteine 73, cysteine 76, cysteine 81, histidine 89, histidine 93, histidine 102, cysteine 115, and cysteine 118. Lysine 139 is covalently cross-linked (Glycyl lysine isopeptide (Lys-Gly) (interchain with G-Cter in SUMO2)). A disordered region spans residues 145–184 (TSKPAEKNNGHIELENKKLEKESKNEQEREKSESMAKENI). The span at 148-180 (PAEKNNGHIELENKKLEKESKNEQEREKSESMA) shows a compositional bias: basic and acidic residues. The residue at position 188 (serine 188) is a Phosphoserine. One can recognise a USP domain in the interval 195–825 (KGLSNLGNTC…QAYLLFYERI (631 aa)). Cysteine 204 functions as the Nucleophile in the catalytic mechanism. Positions 392–407 (QSGKKNINDKNVKKTM) are enriched in basic and acidic residues. Disordered stretches follow at residues 392-456 (QSGK…RRQQ) and 526-553 (ADERKCPEHPEVKSVSTESDLGSLTSAP). Residues 408 to 419 (EEEDKDSEEEKD) are compositionally biased toward acidic residues. A Phosphoserine modification is found at serine 414. Over residues 436–456 (HTQKKAKKQAKKQAKNQRRQQ) the composition is skewed to basic residues. Residues 526-537 (ADERKCPEHPEV) show a composition bias toward basic and acidic residues. The segment covering 539 to 551 (SVSTESDLGSLTS) has biased composition (polar residues). Histidine 760 acts as the Proton acceptor in catalysis.

This sequence belongs to the peptidase C19 family. USP16 subfamily. In terms of assembly, homotetramer. Associates with late pre-40S ribosomes. Interacts with CEP78; promoting deubiquitination of tektins. Phosphorylated at the onset of mitosis and dephosphorylated during the metaphase/anaphase transition. Phosphorylation by AURKB enhances the deubiquitinase activity.

It localises to the nucleus. It carries out the reaction Thiol-dependent hydrolysis of ester, thioester, amide, peptide and isopeptide bonds formed by the C-terminal Gly of ubiquitin (a 76-residue protein attached to proteins as an intracellular targeting signal).. Its function is as follows. Specifically deubiquitinates 'Lys-120' of histone H2A (H2AK119Ub), a specific tag for epigenetic transcriptional repression, thereby acting as a coactivator. Deubiquitination of histone H2A is a prerequisite for subsequent phosphorylation at 'Ser-11' of histone H3 (H3S10ph), and is required for chromosome segregation when cells enter into mitosis. In resting B- and T-lymphocytes, phosphorylation by AURKB leads to enhance its activity, thereby maintaining transcription in resting lymphocytes. Regulates Hox gene expression via histone H2A deubiquitination. Prefers nucleosomal substrates. Does not deubiquitinate histone H2B. Also deubiquitinates non-histone proteins, such as ribosomal protein RPS27A: deubiquitination of monoubiquitinated RPS27A promotes maturation of the 40S ribosomal subunit. Also mediates deubiquitination of tektin proteins (TEKT1, TEKT2, TEK3, TEKT4 and TEKT5), promoting their stability. This Rattus norvegicus (Rat) protein is Ubiquitin carboxyl-terminal hydrolase 16 (Usp16).